Consider the following 435-residue polypeptide: Serine/threonine-protein kinase 40 (435 aa).

The span at 1–10 (MKRRASDRGA) shows a compositional bias: basic and acidic residues. The segment at 1-25 (MKRRASDRGAGETSARAKALGSGIS) is disordered. The region spanning 35 to 331 (FILGPRLGNS…ADVLEALSAI (297 aa)) is the Protein kinase domain. ATP-binding positions include 41-49 (LGNSPVPSI) and Lys-66. The Proton acceptor role is filled by Arg-196.

This sequence belongs to the protein kinase superfamily. CAMK Ser/Thr protein kinase family. As to expression, strongly expressed in heart, brain, placenta, lung, skeletal muscle, kidney, spleen, thymus, prostate, liver, pancreas, testis, ovary, small intestine, colon and peripheral blood leukocytes.

The protein resides in the nucleus. It is found in the cytoplasm. It catalyses the reaction L-seryl-[protein] + ATP = O-phospho-L-seryl-[protein] + ADP + H(+). The enzyme catalyses L-threonyl-[protein] + ATP = O-phospho-L-threonyl-[protein] + ADP + H(+). In terms of biological role, may be a negative regulator of NF-kappa-B and p53-mediated gene transcription. In Homo sapiens (Human), this protein is Serine/threonine-protein kinase 40 (STK40).